A 176-amino-acid chain; its full sequence is Protein GrpE (176 aa).

Positions 1–31 (MSEQKQEFENENAENSEHLQDENLQNIEDVE) are disordered.

It belongs to the GrpE family. As to quaternary structure, homodimer.

It is found in the cytoplasm. Functionally, participates actively in the response to hyperosmotic and heat shock by preventing the aggregation of stress-denatured proteins, in association with DnaK and GrpE. It is the nucleotide exchange factor for DnaK and may function as a thermosensor. Unfolded proteins bind initially to DnaJ; upon interaction with the DnaJ-bound protein, DnaK hydrolyzes its bound ATP, resulting in the formation of a stable complex. GrpE releases ADP from DnaK; ATP binding to DnaK triggers the release of the substrate protein, thus completing the reaction cycle. Several rounds of ATP-dependent interactions between DnaJ, DnaK and GrpE are required for fully efficient folding. This Campylobacter jejuni subsp. doylei (strain ATCC BAA-1458 / RM4099 / 269.97) protein is Protein GrpE.